Reading from the N-terminus, the 2145-residue chain is Mediator of RNA polymerase II transcription subunit 12-like protein (2145 aa).

Residues 1–30 (MAAFGLLSYEQRPLKRPRLGPPDVYPQDPK) are disordered. A Phosphothreonine modification is found at threonine 462. A compositionally biased stretch (basic and acidic residues) spans 1436–1455 (ELEKGQHLGSSSKKERDRQK). 3 disordered regions span residues 1436 to 1460 (ELEK…KSMS), 1721 to 1802 (RSYY…ISSQ), and 2029 to 2145 (DAVL…PSHF). The segment covering 1768-1777 (TKGRKRKTKS) has biased composition (basic residues). Over residues 2052 to 2069 (RQPQVRQQQRLLQMQQPQ) the composition is skewed to low complexity. Positions 2070-2079 (QPQPQQPPQP) are enriched in pro residues. A compositionally biased stretch (polar residues) spans 2089-2099 (TLGLQAMQPQQ). Residues 2104–2124 (RQGLQQTQQQQQTAALVRQLQ) show a composition bias toward low complexity. A compositionally biased stretch (polar residues) spans 2125 to 2136 (KQLSSNQPQQGV).

Belongs to the Mediator complex subunit 12 family. In terms of assembly, may be a component of the Mediator complex, which is known to be composed of MED1, MED4, MED6, MED7, MED8, MED9, MED10, MED11, MED12, MED13, MED13L, MED14, MED15, MED16, MED17, MED18, MED19, MED20, MED21, MED22, MED23, MED24, MED25, MED26, MED27, MED29, MED30, MED31, CCNC, CDK8 and CDC2L6/CDK11. The MED12, MED13, CCNC and CDK8 subunits form a distinct module termed the CDK8 module. Mediator containing the CDK8 module is less active than Mediator lacking this module in supporting transcriptional activation. Individual preparations of the Mediator complex lacking one or more distinct subunits have been variously termed ARC, CRSP, DRIP, PC2, SMCC and TRAP.

The protein localises to the nucleus. Its function is as follows. May be a component of the Mediator complex, a coactivator involved in the regulated transcription of nearly all RNA polymerase II-dependent genes. Mediator functions as a bridge to convey information from gene-specific regulatory proteins to the basal RNA polymerase II transcription machinery. Mediator is recruited to promoters by direct interactions with regulatory proteins and serves as a scaffold for the assembly of a functional preinitiation complex with RNA polymerase II and the general transcription factors. This Homo sapiens (Human) protein is Mediator of RNA polymerase II transcription subunit 12-like protein (MED12L).